Consider the following 250-residue polypeptide: 4-hydroxy-tetrahydrodipicolinate reductase (250 aa).

NAD(+) contacts are provided by residues 10–15, 78–80, and 105–108; these read GAKGRI, GTT, and APNF. His135 (proton donor/acceptor) is an active-site residue. His136 is a binding site for (S)-2,3,4,5-tetrahydrodipicolinate. Lys139 functions as the Proton donor in the catalytic mechanism. Position 145–146 (145–146) interacts with (S)-2,3,4,5-tetrahydrodipicolinate; that stretch reads GT.

This sequence belongs to the DapB family.

It is found in the cytoplasm. The catalysed reaction is (S)-2,3,4,5-tetrahydrodipicolinate + NAD(+) + H2O = (2S,4S)-4-hydroxy-2,3,4,5-tetrahydrodipicolinate + NADH + H(+). The enzyme catalyses (S)-2,3,4,5-tetrahydrodipicolinate + NADP(+) + H2O = (2S,4S)-4-hydroxy-2,3,4,5-tetrahydrodipicolinate + NADPH + H(+). The protein operates within amino-acid biosynthesis; L-lysine biosynthesis via DAP pathway; (S)-tetrahydrodipicolinate from L-aspartate: step 4/4. In terms of biological role, catalyzes the conversion of 4-hydroxy-tetrahydrodipicolinate (HTPA) to tetrahydrodipicolinate. This Streptomyces coelicolor (strain ATCC BAA-471 / A3(2) / M145) protein is 4-hydroxy-tetrahydrodipicolinate reductase.